Here is a 102-residue protein sequence, read N- to C-terminus: Small ribosomal subunit protein uS10 (102 aa).

It belongs to the universal ribosomal protein uS10 family. As to quaternary structure, part of the 30S ribosomal subunit.

Involved in the binding of tRNA to the ribosomes. This is Small ribosomal subunit protein uS10 from Methanococcus maripaludis (strain C7 / ATCC BAA-1331).